The chain runs to 248 residues: Pyridoxine 5'-phosphate synthase (248 aa).

Asn10 serves as a coordination point for 3-amino-2-oxopropyl phosphate. 12 to 13 (DH) provides a ligand contact to 1-deoxy-D-xylulose 5-phosphate. Arg21 contributes to the 3-amino-2-oxopropyl phosphate binding site. The active-site Proton acceptor is His46. 1-deoxy-D-xylulose 5-phosphate contacts are provided by Arg48 and His53. The Proton acceptor role is filled by Glu73. Thr103 contacts 1-deoxy-D-xylulose 5-phosphate. The active-site Proton donor is the His194. Residues Gly195 and 216–217 (GH) contribute to the 3-amino-2-oxopropyl phosphate site.

The protein belongs to the PNP synthase family. As to quaternary structure, homooctamer; tetramer of dimers.

It localises to the cytoplasm. It catalyses the reaction 3-amino-2-oxopropyl phosphate + 1-deoxy-D-xylulose 5-phosphate = pyridoxine 5'-phosphate + phosphate + 2 H2O + H(+). Its pathway is cofactor biosynthesis; pyridoxine 5'-phosphate biosynthesis; pyridoxine 5'-phosphate from D-erythrose 4-phosphate: step 5/5. Catalyzes the complicated ring closure reaction between the two acyclic compounds 1-deoxy-D-xylulose-5-phosphate (DXP) and 3-amino-2-oxopropyl phosphate (1-amino-acetone-3-phosphate or AAP) to form pyridoxine 5'-phosphate (PNP) and inorganic phosphate. The sequence is that of Pyridoxine 5'-phosphate synthase from Legionella pneumophila (strain Corby).